A 240-amino-acid chain; its full sequence is Protein FATTY ACID EXPORT 2, chloroplastic (240 aa).

The N-terminal 84 residues, 1-84 (MADLILSSSS…TANCVDSGVK (84 aa)), are a transit peptide targeting the chloroplast. Positions 97–113 (GGGIGGDKFGGGGGGGD) are enriched in gly residues. The segment at 97-134 (GGGIGGDKFGGGGGGGDGNDDGGEDDKEESDGKKSTPL) is disordered. A compositionally biased stretch (acidic residues) spans 114-125 (GNDDGGEDDKEE). 3 helical membrane passes run 164-184 (SLLAGGLSAAVLLYVFSQLPT), 186-206 (PVLASTVGVVMAGALMYVMGT), and 214-234 (IFPAGVVSIMSFIMTGGYIHG).

It belongs to the TMEM14 family.

Its subcellular location is the plastid. The protein localises to the chloroplast membrane. In terms of biological role, may be involved in free fatty acids export from the plastids. This Arabidopsis thaliana (Mouse-ear cress) protein is Protein FATTY ACID EXPORT 2, chloroplastic.